We begin with the raw amino-acid sequence, 120 residues long: Seripauperin-6 (120 aa).

A signal peptide spans 1–20 (MVKLTSIAAGVAAIAATASA).

Belongs to the SRP1/TIP1 family. Seripauperin subfamily.

The chain is Seripauperin-6 (PAU6) from Saccharomyces cerevisiae (strain ATCC 204508 / S288c) (Baker's yeast).